The following is a 212-amino-acid chain: Riboflavin kinase (212 aa).

Residues 1 to 87 form an H-T-H motif-like region; sequence MKMKTLFLLI…YEEISTALYS (87 aa). The segment at 88-212 is riboflavin kinase; sequence GFIVGEVISG…DGDKVRIEVV (125 aa). Residue 97–102 participates in CDP binding; it reads GIGEGA. Residues threonine 124 and asparagine 126 each coordinate Mg(2+). The FMN site is built by threonine 180 and glutamate 188. 193–196 contacts CDP; the sequence is VKLR.

The protein belongs to the archaeal riboflavin kinase family. It depends on Mg(2+) as a cofactor.

It catalyses the reaction riboflavin + CTP = CDP + FMN + H(+). It functions in the pathway cofactor biosynthesis; FMN biosynthesis; FMN from riboflavin (CTP route): step 1/1. In terms of biological role, catalyzes the CTP-dependent phosphorylation of riboflavin (vitamin B2) to form flavin mononucleotide (FMN). This is Riboflavin kinase (ribK) from Pyrococcus abyssi (strain GE5 / Orsay).